Here is a 324-residue protein sequence, read N- to C-terminus: Mitochondrial oxaloacetate transport protein (324 aa).

Solcar repeat units follow at residues 20-111 (ISKF…IRSS), 126-218 (QSVG…AKNI), and 227-312 (DGPA…TMKL). 6 helical membrane passes run 26-46 (FVAGGLAACIAVTVTNPIELI), 79-99 (GIKGLQKGLNAAYIYQIGLNG), 132-152 (VFSGAASGIIGAVIGSPLFLV), 193-213 (GIDAAILRTGAGSSVQLPIYN), 233-253 (LTASTISGLGVAVVMNPWDVI), and 284-305 (LYKGFAAQVFRIAPHTIMCLTF).

The protein belongs to the mitochondrial carrier (TC 2.A.29) family.

The protein localises to the mitochondrion inner membrane. It catalyses the reaction a dicarboxylate(in) + sulfate(out) = a dicarboxylate(out) + sulfate(in). It carries out the reaction (2S)-2-isopropylmalate(in) + sulfate(out) = (2S)-2-isopropylmalate(out) + sulfate(in). The catalysed reaction is (2R,3S)-3-isopropylmalate(in) + sulfate(out) = (2R,3S)-3-isopropylmalate(out) + sulfate(in). The enzyme catalyses malonate(in) + sulfate(out) = malonate(out) + sulfate(in). It catalyses the reaction oxaloacetate(in) + sulfate(out) = oxaloacetate(out) + sulfate(in). It carries out the reaction thiosulfate(in) + sulfate(out) = thiosulfate(out) + sulfate(in). Its activity is regulated as follows. Inhibited by alpha-keto isocaproate, an intermediate of leucine biosynthesis pathway. Its function is as follows. Antiporter that exchanges dicarboxylates and sulfur oxoanions across the inner membrane of mitochondria. Exports alpha-isopropylmalate from mitochondrial matrix to the cytosol, where it serves as a precursor for leucine biosynthesis. In Saccharomyces cerevisiae (strain ATCC 204508 / S288c) (Baker's yeast), this protein is Mitochondrial oxaloacetate transport protein (OAC1).